We begin with the raw amino-acid sequence, 783 residues long: Tricorn protease-interacting factor F2 (783 aa).

Residues Glu107 and 236–240 (GAMEN) each bind substrate. His271 is a binding site for Zn(2+). Glu272 functions as the Proton acceptor in the catalytic mechanism. The Zn(2+) site is built by His275 and Glu294.

This sequence belongs to the peptidase M1 family. Monomer. Part of the Tricorn proteolytic complex. Zn(2+) is required as a cofactor.

It is found in the cytoplasm. Its function is as follows. Proteases F1, F2 and F3 degrade oligopeptides produced by Tricorn (themselves probably produced by the proteasome), yielding free amino acids. This Thermoplasma acidophilum (strain ATCC 25905 / DSM 1728 / JCM 9062 / NBRC 15155 / AMRC-C165) protein is Tricorn protease-interacting factor F2 (trf2).